We begin with the raw amino-acid sequence, 332 residues long: Chorismate synthase (332 aa).

NADP(+) is bound at residue R46. Residues 123–125 (HFS), G253, 268–272 (KPTSS), and R295 contribute to the FMN site.

It belongs to the chorismate synthase family. Homotetramer. The cofactor is FMNH2.

The catalysed reaction is 5-O-(1-carboxyvinyl)-3-phosphoshikimate = chorismate + phosphate. Its pathway is metabolic intermediate biosynthesis; chorismate biosynthesis; chorismate from D-erythrose 4-phosphate and phosphoenolpyruvate: step 7/7. In terms of biological role, catalyzes the anti-1,4-elimination of the C-3 phosphate and the C-6 proR hydrogen from 5-enolpyruvylshikimate-3-phosphate (EPSP) to yield chorismate, which is the branch point compound that serves as the starting substrate for the three terminal pathways of aromatic amino acid biosynthesis. This reaction introduces a second double bond into the aromatic ring system. The chain is Chorismate synthase from Chitinophaga pinensis (strain ATCC 43595 / DSM 2588 / LMG 13176 / NBRC 15968 / NCIMB 11800 / UQM 2034).